An 89-amino-acid chain; its full sequence is Small ribosomal subunit protein bS20 (89 aa).

It belongs to the bacterial ribosomal protein bS20 family.

Binds directly to 16S ribosomal RNA. In Stenotrophomonas maltophilia (strain K279a), this protein is Small ribosomal subunit protein bS20.